Here is a 522-residue protein sequence, read N- to C-terminus: MVRSGKNGDLHLKQIAYYKRTGEYHPTTLPSERRGIRRAAKKFVFKEKKLFYVGKDRKQNRLVIVSEEEKKKVLRECHENDSGAHHGISRTLTLVESNYYWTSVTNDVKQWVYACQHCQVAKNTVIVAPKQHLLKVENPWSLVTVDLMGPFHTSNRSHVYAVIMTDLFTKWIVILPLCDVSASEVSKAIINIFFLYGPPQKIIMDQRDEFIQQINIELYRLFGIKQIVISHTSGSVNPTESTPNTIKAFLSKHCADHPNNWDDHLSAVSFAFNVTHLEPTKNTPYFQMFSRNPYMPETSDSLHEVDGDNTSMFAKILDAIKEADKIMENKTTSLGQMENNNLDELNKSKIIVKKKPKQLNPFHLKVGHEVLRQRKNWWKDGRFQSEWVGPCVIDYITESGCAVLRDNTGVRLKRPIKMSHLKPYIRESSEQESLYLLQGSVVADHDYIGLPEIPVGAYQANILVEDATIGIVDNELLTSSKDRELLEYRNTKVSPLIDDHSSLEKQTFSLLDSSNQVLEYLS.

An Integrase catalytic domain is found at 135 to 292; that stretch reads KVENPWSLVT…TPYFQMFSRN (158 aa). Residue serine 502 is modified to Phosphoserine.

The protein is Gypsy retrotransposon integrase-like protein 1 (GIN1) of Pongo abelii (Sumatran orangutan).